A 448-amino-acid chain; its full sequence is Dual specificity mitogen-activated protein kinase kinase 5 (448 aa).

Residues 18–25 (VIRIKIPN) form an interaction with MAPK7 region. The PB1 domain maps to 18 to 109 (VIRIKIPNSG…EPLQIFPRAC (92 aa)). The interaction with MAP3K2/MAP3K3 stretch occupies residues 64-68 (DEDGD). Residues 116 to 144 (NIHGLKVNTRAGPSQHSSPAVSDSLPSNS) form a disordered region. Positions 117-131 (IHGLKVNTRAGPSQH) are interaction with MAPK7. A compositionally biased stretch (polar residues) spans 126–144 (AGPSQHSSPAVSDSLPSNS). One can recognise a Protein kinase domain in the interval 166–409 (IRYRDTLGHG…MRKQPKERPA (244 aa)). ATP-binding positions include 172–180 (LGHGNGGTV) and K195. Residue D283 is the Proton acceptor of the active site. Phosphoserine is present on S311. T315 carries the phosphothreonine modification.

The protein belongs to the protein kinase superfamily. STE Ser/Thr protein kinase family. MAP kinase kinase subfamily. Interacts with PARD6A, MAP3K3 and MAPK7. Forms a complex with SQSTM1 and PRKCZ or PRKCI. As to quaternary structure, (Microbial infection) Interacts with Yersinia YopJ. It depends on Mg(2+) as a cofactor. Activated by phosphorylation on Ser/Thr by MAP kinase kinase kinases. Post-translationally, (Microbial infection) Yersinia YopJ may acetylate Ser/Thr residues, preventing phosphorylation and activation, thus blocking the MAPK signaling pathway. Expressed in many adult tissues. Abundant in heart and skeletal muscle.

The enzyme catalyses L-seryl-[protein] + ATP = O-phospho-L-seryl-[protein] + ADP + H(+). The catalysed reaction is L-threonyl-[protein] + ATP = O-phospho-L-threonyl-[protein] + ADP + H(+). It carries out the reaction L-tyrosyl-[protein] + ATP = O-phospho-L-tyrosyl-[protein] + ADP + H(+). Acts as a scaffold for the formation of a ternary MAP3K2/MAP3K3-MAP3K5-MAPK7 signaling complex. Activation of this pathway appears to play a critical role in protecting cells from stress-induced apoptosis, neuronal survival and cardiac development and angiogenesis. As part of the MAPK/ERK signaling pathway, acts as a negative regulator of apoptosis in cardiomyocytes via promotion of STUB1/CHIP-mediated ubiquitination and degradation of ICER-type isoforms of CREM. The polypeptide is Dual specificity mitogen-activated protein kinase kinase 5 (MAP2K5) (Homo sapiens (Human)).